The chain runs to 110 residues: Secreted RxLR effector protein 89 (110 aa).

Positions 1 to 22 are cleaved as a signal peptide; the sequence is MTSVVIVVSVAVLLGVLVITDS. N-linked (GlcNAc...) asparagine glycosylation is present at Asn-29. The RxLR-dEER motif lies at 61–74; it reads RHLRTILQWWQERR.

The protein belongs to the RxLR effector family.

Its subcellular location is the secreted. The protein resides in the host nucleus. The protein localises to the host cytoplasm. Functionally, secreted effector that completely suppresses the host cell death induced by cell death-inducing proteins. This is Secreted RxLR effector protein 89 from Plasmopara viticola (Downy mildew of grapevine).